We begin with the raw amino-acid sequence, 358 residues long: 5,10-methenyltetrahydromethanopterin hydrogenase (358 aa).

Belongs to the HMD family. Homotetramer.

The enzyme catalyses 5,10-methenyl-5,6,7,8-tetrahydromethanopterin + H2 = 5,10-methylenetetrahydromethanopterin + H(+). Its pathway is one-carbon metabolism; methanogenesis from CO(2); 5,10-methylene-5,6,7,8-tetrahydromethanopterin from 5,10-methenyl-5,6,7,8-tetrahydromethanopterin (hydrogen route): step 1/1. With respect to regulation, activity requires salt; 100 mM potassium phosphate, potassium chloride, and sodium chloride are equally effective. In terms of biological role, catalyzes the reversible reduction of methenyl-H(4)MPT(+) to methylene-H(4)MPT. This Methanopyrus kandleri (strain AV19 / DSM 6324 / JCM 9639 / NBRC 100938) protein is 5,10-methenyltetrahydromethanopterin hydrogenase.